Consider the following 142-residue polypeptide: Large ribosomal subunit protein uL11 (142 aa).

It belongs to the universal ribosomal protein uL11 family. As to quaternary structure, part of the ribosomal stalk of the 50S ribosomal subunit. Interacts with L10 and the large rRNA to form the base of the stalk. L10 forms an elongated spine to which L12 dimers bind in a sequential fashion forming a multimeric L10(L12)X complex. Post-translationally, one or more lysine residues are methylated.

In terms of biological role, forms part of the ribosomal stalk which helps the ribosome interact with GTP-bound translation factors. This Photobacterium profundum (strain SS9) protein is Large ribosomal subunit protein uL11.